A 517-amino-acid chain; its full sequence is Sphingolipid C9-methyltransferase A (517 aa).

Transmembrane regions (helical) follow at residues Leu58–Leu78 and Thr80–Ala100. Residues Tyr223–Thr224, Thr286–Gln291, and Tyr316–Arg317 contribute to the S-adenosyl-L-methionine site. Asn290 carries an N-linked (GlcNAc...) asparagine glycan. An N-linked (GlcNAc...) asparagine glycan is attached at Asn478.

This sequence belongs to the CFA/CMAS family.

Its subcellular location is the membrane. The enzyme catalyses a (4E,8E)-4-sphinga-4,8-dienine ceramide + S-adenosyl-L-methionine = a 9-methyl-(4E,8E)-sphinga-4,8-dienine ceramide + S-adenosyl-L-homocysteine + H(+). It participates in lipid metabolism; sphingolipid metabolism. Catalyzes methylation of the sphingoid base component of glucosylceramides (GluCers) at the C9-position. Sphingolipid C9-methylation requires 4,8-desaturated ceramides as substrates. Glucosylceramides play important roles in growth, differentiation and pathogenicity. The methyl group at the C9-position distinguishes fungal glucosylceramides from those of plants and animals and may thus play a role in host-pathogen interactions enabling the host to recognize the fungal attack and initiate specific defense responses. In Emericella nidulans (strain FGSC A4 / ATCC 38163 / CBS 112.46 / NRRL 194 / M139) (Aspergillus nidulans), this protein is Sphingolipid C9-methyltransferase A.